A 352-amino-acid chain; its full sequence is Molybdenum import ATP-binding protein ModC (352 aa).

One can recognise an ABC transporter domain in the interval 1–229 (MLELNFSQTL…SVMHPWLPKE (229 aa)). 31-38 (GVSGAGKT) provides a ligand contact to ATP. A Mop domain is found at 289–352 (QTSIRNVLRA…AQVKSVSITA (64 aa)).

This sequence belongs to the ABC transporter superfamily. Molybdate importer (TC 3.A.1.8) family. The complex is composed of two ATP-binding proteins (ModC), two transmembrane proteins (ModB) and a solute-binding protein (ModA).

It localises to the cell inner membrane. The catalysed reaction is molybdate(out) + ATP + H2O = molybdate(in) + ADP + phosphate + H(+). Its function is as follows. Part of the ABC transporter complex ModABC involved in molybdenum import. Responsible for energy coupling to the transport system. The sequence is that of Molybdenum import ATP-binding protein ModC from Salmonella typhi.